A 118-amino-acid chain; its full sequence is Large ribosomal subunit protein uL18 (118 aa).

The protein belongs to the universal ribosomal protein uL18 family. In terms of assembly, part of the 50S ribosomal subunit; part of the 5S rRNA/L5/L18/L25 subcomplex. Contacts the 5S and 23S rRNAs.

Functionally, this is one of the proteins that bind and probably mediate the attachment of the 5S RNA into the large ribosomal subunit, where it forms part of the central protuberance. The chain is Large ribosomal subunit protein uL18 from Rickettsia akari (strain Hartford).